We begin with the raw amino-acid sequence, 393 residues long: Xylose transport system permease protein XylH (393 aa).

Residues 1–24 (MSKSNPSEVKLAVPTSGGFSGLKS) are Periplasmic-facing. Residues 25-45 (LNLQVFVMIAAIIAIMLFFTW) form a helical membrane-spanning segment. Residues 46 to 64 (TTDGAYLSARNVSNLLRQT) are Cytoplasmic-facing. The helical transmembrane segment at 65 to 85 (AITGILAVGMVFVIISAEIDL) threads the bilayer. At 86–102 (SVGSMMGLLGGVAAICD) the chain is on the periplasmic side. Residues 103–123 (VWLGWPLPLTIIVTLVLGLLL) traverse the membrane as a helical segment. At 124–135 (GAWNGWWVAYRK) the chain is on the cytoplasmic side. Residues 136-156 (VPSFIVTLAGMLAFRGILIGI) form a helical membrane-spanning segment. The Periplasmic portion of the chain corresponds to 157–175 (TNGTTVSPTSAAMSQIGQS). The chain crosses the membrane as a helical span at residues 176 to 196 (YLPASTGFIIGALGLMAFVGW). The Cytoplasmic portion of the chain corresponds to 197 to 214 (QWRGRMRRQALGLQSPAS). The helical transmembrane segment at 215-235 (TAVVGRQALTAIIVLGAIWLL) threads the bilayer. Over 236–239 (NDYR) the chain is Periplasmic. The chain crosses the membrane as a helical span at residues 240–260 (GVPTPVLLLTLLLLGGMFMAT). Residues 261 to 287 (RTAFGRRIYAIGGNLEAARLSGINVER) are Cytoplasmic-facing. A helical membrane pass occupies residues 288–308 (TKLAVFAINGLMVAIAGLILS). Residues 309 to 312 (SRLG) are Periplasmic-facing. The helical transmembrane segment at 313 to 333 (AGSPSAGNIAELDAIAACVIG) threads the bilayer. Residues 334–336 (GTS) are Cytoplasmic-facing. A helical transmembrane segment spans residues 337–357 (LAGGVGSVAGAVMGAFIMASL). Over 358-365 (DNGMSMMD) the chain is Periplasmic. The chain crosses the membrane as a helical span at residues 366–386 (VPTFWQYIVKGAILLLAVWMD). Topologically, residues 387 to 393 (SATKRRS) are cytoplasmic.

This sequence belongs to the binding-protein-dependent transport system permease family. AraH/RbsC subfamily.

The protein resides in the cell inner membrane. Functionally, part of the binding-protein-dependent transport system for D-xylose. Probably responsible for the translocation of the substrate across the membrane. This chain is Xylose transport system permease protein XylH (xylH), found in Escherichia coli O6:H1 (strain CFT073 / ATCC 700928 / UPEC).